Here is an 83-residue protein sequence, read N- to C-terminus: Kappa-theraphotoxin-Cg2a (83 aa).

Positions Met-1 to Ala-21 are cleaved as a signal peptide. The propeptide occupies Glu-22 to Arg-53. 3 cysteine pairs are disulfide-bonded: Cys-55–Cys-69, Cys-62–Cys-74, and Cys-68–Cys-78. Leucine amide is present on Leu-82.

Belongs to the neurotoxin 30 (phrixotoxin) family. Expressed by the venom gland.

The protein resides in the secreted. In terms of biological role, inhibits voltage-gated potassium channels of the subtype Kv4.1/KCND1 with high affinity and shows weak effects on Kv4.2/KCND2 and Kv2.1/KCNB1 subtypes. The toxin modifies the gating behavior of the channel and may interact with the S3-S4 extracellular loop. The polypeptide is Kappa-theraphotoxin-Cg2a (Chilobrachys guangxiensis (Chinese earth tiger tarantula)).